We begin with the raw amino-acid sequence, 462 residues long: Alanine racemase (462 aa).

The active-site Proton acceptor; specific for D-alanine is the Lys34. Position 34 is an N6-(pyridoxal phosphate)lysine (Lys34). A unknown insert region spans residues 73 to 132 (ASWHESVFRHCEKNYTVIRRSNPVKNSVSQNFFNYFSGLQQCFAPRNDGSSIHATTPKAL). Residue Arg193 participates in substrate binding. The region spanning 286–332 (DLSNNLSYKEEFEGDTERRTAAYINVREDSSTGSTYKLPLEGGYSRG) is the RPE1 insert domain. Tyr357 functions as the Proton acceptor; specific for L-alanine in the catalytic mechanism. Residue Met405 coordinates substrate.

The protein belongs to the alanine racemase family. It depends on pyridoxal 5'-phosphate as a cofactor.

It catalyses the reaction L-alanine = D-alanine. It functions in the pathway amino-acid biosynthesis; D-alanine biosynthesis; D-alanine from L-alanine: step 1/1. In terms of biological role, catalyzes the interconversion of L-alanine and D-alanine. May also act on other amino acids. The protein is Alanine racemase (alr) of Rickettsia felis (strain ATCC VR-1525 / URRWXCal2) (Rickettsia azadi).